We begin with the raw amino-acid sequence, 81 residues long: U-poneritoxin(01)-Om6a (81 aa).

The N-terminal stretch at 1-21 is a signal peptide; sequence MRRSYVLLAFAIVLIISIISA. Positions 22–43 are excised as a propeptide; it reads QVEADASSDAFADAVADAVADP. A79 is subject to Alanine amide.

The protein belongs to the formicidae venom precursor-01 superfamily. In terms of processing, truncated sequences of this peptide have also been found in the venom. It is possible they have been cleaved in the venom. In terms of tissue distribution, expressed by the venom gland.

The protein resides in the secreted. In terms of biological role, cationic amphipathic alpha-helical peptide with antimicrobial activities against E.coli (MIC=3.1), and S.aureus (MIC=3.1 uM). Also shows histamine-releasing activity (33.6% at 10 uM). Does not have activity against S.cerevisiae. Does not show hemolytic activity, even at 50 uM. The protein is U-poneritoxin(01)-Om6a of Odontomachus monticola (Trap-jaw ant).